A 467-amino-acid polypeptide reads, in one-letter code: 3-isopropylmalate dehydratase large subunit (467 aa).

[4Fe-4S] cluster-binding residues include Cys-348, Cys-409, and Cys-412.

This sequence belongs to the aconitase/IPM isomerase family. LeuC type 1 subfamily. As to quaternary structure, heterodimer of LeuC and LeuD. [4Fe-4S] cluster serves as cofactor.

The enzyme catalyses (2R,3S)-3-isopropylmalate = (2S)-2-isopropylmalate. Its pathway is amino-acid biosynthesis; L-leucine biosynthesis; L-leucine from 3-methyl-2-oxobutanoate: step 2/4. Catalyzes the isomerization between 2-isopropylmalate and 3-isopropylmalate, via the formation of 2-isopropylmaleate. The chain is 3-isopropylmalate dehydratase large subunit from Thiobacillus denitrificans (strain ATCC 25259 / T1).